A 308-amino-acid polypeptide reads, in one-letter code: Phosphoribosylaminoimidazole-succinocarboxamide synthase (308 aa).

The protein belongs to the SAICAR synthetase family.

It carries out the reaction 5-amino-1-(5-phospho-D-ribosyl)imidazole-4-carboxylate + L-aspartate + ATP = (2S)-2-[5-amino-1-(5-phospho-beta-D-ribosyl)imidazole-4-carboxamido]succinate + ADP + phosphate + 2 H(+). It functions in the pathway purine metabolism; IMP biosynthesis via de novo pathway; 5-amino-1-(5-phospho-D-ribosyl)imidazole-4-carboxamide from 5-amino-1-(5-phospho-D-ribosyl)imidazole-4-carboxylate: step 1/2. The chain is Phosphoribosylaminoimidazole-succinocarboxamide synthase from Xylella fastidiosa (strain Temecula1 / ATCC 700964).